We begin with the raw amino-acid sequence, 114 residues long: uncharacterized protein (114 aa).

A run of 3 helical transmembrane segments spans residues 38–60 (PLWF…TAGI), 64–86 (YAAI…AHMF), and 91–113 (SVIM…MGSY).

The protein resides in the cell membrane. This is an uncharacterized protein from Bacillus subtilis (strain 168).